The primary structure comprises 403 residues: Phosphoglycerate kinase (403 aa).

Residues 21-23 (DFN), Arg-36, 59-62 (HLGR), Arg-119, and Arg-154 contribute to the substrate site. ATP is bound by residues Lys-207, Gly-299, Glu-330, and 357–360 (GGDA).

The protein belongs to the phosphoglycerate kinase family. As to quaternary structure, monomer.

It localises to the cytoplasm. The catalysed reaction is (2R)-3-phosphoglycerate + ATP = (2R)-3-phospho-glyceroyl phosphate + ADP. The protein operates within carbohydrate degradation; glycolysis; pyruvate from D-glyceraldehyde 3-phosphate: step 2/5. The chain is Phosphoglycerate kinase (pgk) from Chlamydia muridarum (strain MoPn / Nigg).